A 369-amino-acid chain; its full sequence is Homoserine O-succinyltransferase (369 aa).

The 280-residue stretch at 49 to 328 folds into the AB hydrolase-1 domain; it reads NAVFICHALT…RFDSTQSARM (280 aa). Ser154 acts as the Nucleophile in catalysis. A substrate-binding site is contributed by Arg224. Residues Asp317 and His350 contribute to the active site. Substrate is bound at residue Asp351.

It belongs to the AB hydrolase superfamily. MetX family. In terms of assembly, homodimer.

Its subcellular location is the cytoplasm. It catalyses the reaction L-homoserine + succinyl-CoA = O-succinyl-L-homoserine + CoA. It participates in amino-acid biosynthesis; L-methionine biosynthesis via de novo pathway; O-succinyl-L-homoserine from L-homoserine: step 1/1. Transfers a succinyl group from succinyl-CoA to L-homoserine, forming succinyl-L-homoserine. In Nocardioides sp. (strain ATCC BAA-499 / JS614), this protein is Homoserine O-succinyltransferase.